The sequence spans 122 residues: Large ribosomal subunit protein uL14c (122 aa).

It belongs to the universal ribosomal protein uL14 family. Part of the 50S ribosomal subunit.

It localises to the plastid. The protein localises to the chloroplast. Its function is as follows. Binds to 23S rRNA. This is Large ribosomal subunit protein uL14c from Chlorokybus atmophyticus (Soil alga).